A 232-amino-acid chain; its full sequence is Ornithine carbamoyltransferase (232 aa).

Carbamoyl phosphate is bound by residues Gln15, Arg39, and 66–69 (HPTQ). L-ornithine contacts are provided by residues Asn99, Asp163, and 167 to 168 (SM). Carbamoyl phosphate is bound by residues 204–207 (HCLP) and Thr232.

This sequence belongs to the aspartate/ornithine carbamoyltransferase superfamily. OTCase family.

Its subcellular location is the cytoplasm. The enzyme catalyses carbamoyl phosphate + L-ornithine = L-citrulline + phosphate + H(+). Its pathway is amino-acid biosynthesis; L-arginine biosynthesis; L-arginine from L-ornithine and carbamoyl phosphate: step 1/3. The polypeptide is Ornithine carbamoyltransferase (argF) (Neisseria animalis).